Reading from the N-terminus, the 305-residue chain is Insulin-like peptide (305 aa).

Residues 1–22 (MNLSSVYVLASLAVVCLLVKET) form the signal peptide. Intrachain disulfides connect Cys28–Cys87, Cys40–Cys100, and Cys86–Cys91. Residues 52–76 (SVSKRAIDFISEQQAKDYMGAMPHI) constitute a propeptide, connecting peptide. A d region spans residues 102–114 (PYSTAPATATPVR). Residues 102–305 (PYSTAPATAT…RDSYHLTELR (204 aa)) constitute a propeptide, d/E peptide. A compositionally biased stretch (low complexity) spans 107–118 (PATATPVRTTEP). 2 disordered regions span residues 107-130 (PATATPVRTTEPQPEEAEDDPLDG) and 236-305 (HNQT…TELR). Residues 115 to 305 (TTEPQPEEAE…RDSYHLTELR (191 aa)) form an e region. Residues 119–128 (QPEEAEDDPL) show a composition bias toward acidic residues. 2 stretches are compositionally biased toward basic and acidic residues: residues 236-245 (HNQTDKKEPT) and 291-305 (RRIESRDSYHLTELR).

The protein belongs to the insulin family.

It is found in the secreted. The polypeptide is Insulin-like peptide (ILP) (Branchiostoma californiense (California lancelet)).